The following is a 663-amino-acid chain: DNA ligase (663 aa).

NAD(+) is bound by residues 33–37 (DYSYD), 82–83 (SI), and glutamate 112. Catalysis depends on lysine 114, which acts as the N6-AMP-lysine intermediate. NAD(+) contacts are provided by arginine 135, glutamate 171, lysine 285, and lysine 309. Cysteine 403, cysteine 406, cysteine 419, and cysteine 424 together coordinate Zn(2+). The 83-residue stretch at 581 to 663 (DKEAPLQGKV…LRILDAKSVS (83 aa)) folds into the BRCT domain.

The protein belongs to the NAD-dependent DNA ligase family. LigA subfamily. Requires Mg(2+) as cofactor. Mn(2+) serves as cofactor.

It catalyses the reaction NAD(+) + (deoxyribonucleotide)n-3'-hydroxyl + 5'-phospho-(deoxyribonucleotide)m = (deoxyribonucleotide)n+m + AMP + beta-nicotinamide D-nucleotide.. Its function is as follows. DNA ligase that catalyzes the formation of phosphodiester linkages between 5'-phosphoryl and 3'-hydroxyl groups in double-stranded DNA using NAD as a coenzyme and as the energy source for the reaction. It is essential for DNA replication and repair of damaged DNA. The chain is DNA ligase from Chlamydia trachomatis serovar A (strain ATCC VR-571B / DSM 19440 / HAR-13).